The sequence spans 619 residues: CREB-regulated transcription coactivator 3 (619 aa).

Residues 1–103 (MAASPGSGSA…LVERPSRNRF (103 aa)) are required for interaction with HTLV-1 TAX. Ser4 and Ser62 each carry phosphoserine. A disordered region spans residues 103-150 (FHPLHRRSGDKPGRQFDGSAFGANYSSQPLDESWPRQQPPWKDEKHPG). Residue Thr160 is modified to Phosphothreonine. Ser162 carries the post-translational modification Phosphoserine; by SIK2. The span at 165 to 175 (ALHTSALSTKP) shows a compositional bias: polar residues. The tract at residues 165–185 (ALHTSALSTKPQDPYGGGGQS) is disordered. Lys232 participates in a covalent cross-link: Glycyl lysine isopeptide (Lys-Gly) (interchain with G-Cter in SUMO2). Phosphoserine occurs at positions 273, 329, 332, 370, 391, 396, 410, and 443. The segment at 375–431 (STTNLSGPSRRRQPPVSPLTLSPGPEAHQGFSRQLSSTSPLAPYPTSQMVSSDRSQL) is disordered. The interval 380–401 (SGPSRRRQPPVSPLTLSPGPEA) is required for interaction with PPP2CA and PPP2R1A. The span at 405-431 (FSRQLSSTSPLAPYPTSQMVSSDRSQL) shows a compositional bias: polar residues.

Belongs to the TORC family. Binding, as a tetramer, through its N-terminal region, with the bZIP domain of CREB1 enhances recruitment of TAF4 to the promoter. 'Arg-314' in the bZIP domain of CREB1 is essential for this interaction. Interacts (when phosphorylated at Ser-162 and Se-273) with 14-3-3 proteins. Interacts with YWHAE. Interacts (when phosphorylated at Ser-391) with phosphatase PP2A catalytic subunit PPP2CA and regulatory subunits PPP2R1A and PPP2R2A. Interacts, via the N-terminal with the ankyrin repeats of BCL3, to form a complex with CREB1 on CRE and TxRE responsive elements and represses HTLV-1 LTR-mediated transcription. In terms of assembly, (Microbial infection) Interacts with HTLV-1 protein Tax; this interaction enhances tax transcriptional activity. Post-translationally, phosphorylation/dephosphorylation states of Ser-273 are required for regulating transduction of CREB activity. CRTCs/TORCs are inactive when phosphorylated, and active when dephosphorylated at this site. May be phosphorylated at Ser-391 by MAPK3/ERK1 and/or MAPK1/ERK2 or by some cyclin-dependent kinases such as CDK1,CDK2 or CDK5. Following adenylyl cyclase activation, dephosphorylated at Ser-162 and Ser-273 resulting in its dissociation from 14-3-3 proteins probably promoting CRTC3 translocation into the nucleus. As to expression, predominantly expressed in B and T lymphocytes. Highest levels in lung. Also expressed in brain, colon, heart, kidney, ovary, and prostate. Weak expression in liver, pancreas, muscle, small intestine, spleen and stomach.

The protein localises to the nucleus. The protein resides in the cytoplasm. Functionally, transcriptional coactivator for CREB1 which activates transcription through both consensus and variant cAMP response element (CRE) sites. Acts as a coactivator, in the SIK/TORC signaling pathway, being active when dephosphorylated and acts independently of CREB1 'Ser-133' phosphorylation. Enhances the interaction of CREB1 with TAF4. Regulates the expression of specific CREB-activated genes such as the steroidogenic gene, StAR. Potent coactivator of PPARGC1A and inducer of mitochondrial biogenesis in muscle cells. Also coactivator for TAX activation of the human T-cell leukemia virus type 1 (HTLV-1) long terminal repeats (LTR). This chain is CREB-regulated transcription coactivator 3 (CRTC3), found in Homo sapiens (Human).